The primary structure comprises 1227 residues: Protein U7 (1227 aa).

This sequence belongs to the herpesviridae US22 family.

This Homo sapiens (Human) protein is Protein U7 (U7/U5).